Here is a 425-residue protein sequence, read N- to C-terminus: Dihydroorotase (425 aa).

Positions 56 and 58 each coordinate Zn(2+). Substrate-binding positions include 58–60 (HYR) and Asn-90. Residues Asp-148, His-175, and His-228 each contribute to the Zn(2+) site. Residue Asn-274 participates in substrate binding. Residue Asp-301 participates in Zn(2+) binding. Residue Asp-301 is part of the active site. Substrate is bound by residues His-305 and 319–320 (FG).

The protein belongs to the metallo-dependent hydrolases superfamily. DHOase family. Class I DHOase subfamily. Requires Zn(2+) as cofactor.

The catalysed reaction is (S)-dihydroorotate + H2O = N-carbamoyl-L-aspartate + H(+). It functions in the pathway pyrimidine metabolism; UMP biosynthesis via de novo pathway; (S)-dihydroorotate from bicarbonate: step 3/3. Functionally, catalyzes the reversible cyclization of carbamoyl aspartate to dihydroorotate. This Lactobacillus gasseri (strain ATCC 33323 / DSM 20243 / BCRC 14619 / CIP 102991 / JCM 1131 / KCTC 3163 / NCIMB 11718 / NCTC 13722 / AM63) protein is Dihydroorotase.